The following is a 402-amino-acid chain: Phosphoglycerate kinase (402 aa).

Substrate-binding positions include 29–31, R45, 69–72, R125, and R158; these read DFN and HLGR. Residues K209, E331, and 357–360 each bind ATP; that span reads GGDT.

Belongs to the phosphoglycerate kinase family.

The protein resides in the cytoplasm. The catalysed reaction is (2R)-3-phosphoglycerate + ATP = (2R)-3-phospho-glyceroyl phosphate + ADP. The protein operates within carbohydrate degradation; glycolysis; pyruvate from D-glyceraldehyde 3-phosphate: step 2/5. This Helicobacter pylori (strain ATCC 700392 / 26695) (Campylobacter pylori) protein is Phosphoglycerate kinase (pgk).